A 208-amino-acid chain; its full sequence is ATP-dependent Clp protease proteolytic subunit (208 aa).

Residue S105 is the Nucleophile of the active site. The active site involves H130.

Belongs to the peptidase S14 family. As to quaternary structure, fourteen ClpP subunits assemble into 2 heptameric rings which stack back to back to give a disk-like structure with a central cavity, resembling the structure of eukaryotic proteasomes.

Its subcellular location is the cytoplasm. The catalysed reaction is Hydrolysis of proteins to small peptides in the presence of ATP and magnesium. alpha-casein is the usual test substrate. In the absence of ATP, only oligopeptides shorter than five residues are hydrolyzed (such as succinyl-Leu-Tyr-|-NHMec, and Leu-Tyr-Leu-|-Tyr-Trp, in which cleavage of the -Tyr-|-Leu- and -Tyr-|-Trp bonds also occurs).. Functionally, cleaves peptides in various proteins in a process that requires ATP hydrolysis. Has a chymotrypsin-like activity. Plays a major role in the degradation of misfolded proteins. The sequence is that of ATP-dependent Clp protease proteolytic subunit from Xanthomonas axonopodis pv. citri (strain 306).